A 2079-amino-acid chain; its full sequence is MYSGLWTKNGEQILPSFISINAKVVDLAAQIVFTKTYSDINKYFATMNKMNSSNEEDATFKAFLNTSMGVLCGFEINLDGKKITSQVVSQADAMRLFEKNQISTADDIVKEAEFNNSDPHIEEDFFLCKVNNLSQYKELEIIITYSTEMSTQGDYLFMEFPTSLTTIRSSQFFETLDNENSTTNTNTQTQPQSVNTTTTTTPSTTTATNITNINNNIQNIGSSTTGGLTHSTSSNKLSLSSSSIQVNQKQGLLIEMNLDMPSKISEIISPSHSGLIDVEYKGETGKVTYKDSRSIDVVNQSDLVVLIKLDNPHEPYGFIEENENGSRALMIAFYPQLSSAAIAASATTPVVESELIFLVDVSESMEGYNMKHAKKALHRFLHSLSKDTYFNIISFASSHRKLFAQSVKYNDENLKAATAYVESLKAISHGETNLLEPLKDIYSVDATCPRKIFLLTDGRVNNIGPIVDLVRQNAHNTSVFPIGMGEFVSRQLVEYIANAGSGVAELVIENETIESKVMRQLKRALQPAMSNIKVDWGSLSSKSQAPRDLRTLFFGDRLTIYNILGKDEKIDGTTVKLIANGPTGPVSFPVTIKSEETKKGNLVHSLAAYTLIQDLQDQIYENNLVDPKDIDPIRQKIIDLGIKYGLASNYTSFCSVEQPDQFNELLNNNKQSEQAQETTTTTTTATTVDDNVVIEENKQPEPIVEEQPPVLNGNINLQNLTINHDGKSNDNGLFKSNDRLKTHHQGESAMISLRGSASGIPTTLSGSGIPFYNPSSPNHDRNINTTQQPTPTQSTPLKTPLKTPLTPLSKSGLKVSSPEFVPKNTLSAKAAPFVPSPNKLPTTTTSAPATTPITTPAPTTTTTEVKPTVAEPVKPVVAEPTKPVVAEPTIPAVAEPIKPVVTEPTKPVVEEPAKPAVKPTLFEMIKIAEAKAAAEQKAAAEQKAIADAKAAAEQAAKPVEPAVVQQQQPQQTKPKADKQSKQNAKDNKQSNKPVVVEQKPPVVTETKPTVATESATPTKPTFAQAAAAAAAAAQQAAQQAAATTPVKQQPTKQTTPNKSTPAVETKSVVAETKPAVEQPKPVETKPVVEQPKPVETKPVEQTKPVETKPVEVKPTVEQPKPVEVKPTVEQPKPIETKPTVNSIASTLANFGFQTNEPAKQATPTPAPTPVQSNESNNNNNNNNNNNNNNNNNNNNNNNIVSSTPIKKPAVTNILPTQAVILSSGGRRVYNNDFLLSFKDSNTKAPDSLKTTPIFSNGPQGISPSSGNGSNKSHFGKKRGDRGGRGGRDRNADAEPSTPIIVKKVFSQDVQGTHQELLKKFKFNLNRITMDTYSSLIKNIDELKVPDEEALKSISKILFEKAIIDQKYSAVYAILAGHLDTTFPKFAELSLKRAILDNCQTEFSAVVDKSKFEGLSKEDLEEQEFIIKRRVLGNIKFIGELYKHGVLGEKVAKAIVVQLITKCEERLDEESIEPLVKILNTIGKKLDEVDKANTDLYFSKVTNISNNPVVTSRGRFILLDLIDLRANKWQPKNSTQTKTKKDESDKEERFIAKHGGPQKRENDSRRDGGRDSRGDDRRGGGGRDSRGDDRRGGRDSRDAPRSAFGGKSSKDGWETVGAKGGNNRDKGGRGGDRSGGKQSPSGKKDSGFGPSSGGSSLFGSRRGDDRRDGGGNSSPYRPGQGFGRKDDQSSSIPSIPNRSNAFSALEDDDYQPSTSPQPPSVFGNRSNDRDSRGPSKPDNRKQPAQPPAPVEPVKPKINFEKIEDDISMTLDEYAETQDIDEAIECIKEINEPTVLGKQFNIFIMKSLERKEKEKQLIIELFSGILTAQLFNAEQIKEGLKEIIDTIEDIEIDLPFSGVFVATIVGICIESEIFPLNYLEEAYAHLVDSDKAEEMIVNTFNSIVKVSDKDRLVEIYENTKGLDILKLFALKNRKVAYLEEFYQTHFPYLSHEKAVEGSNESALNEQPDLIEHLLLLQSADGYWQLDKKLAGILGISLNILEEVDSSDSCVITTHPEVWATCLAITFVNLNNVSDPDDEDDLELVLSKSHKWLASQYQSDKPPKQSQDDVLLKAKRLLSEVL.

The 137-residue stretch at glutamate 11–threonine 147 folds into the VIT domain. Positions asparagine 178–serine 203 are disordered. Positions asparagine 180–serine 203 are enriched in low complexity. One can recognise a VWFA domain in the interval glutamate 354–leucine 525. 5 disordered regions span residues proline 761 to proline 800, proline 832 to lysine 866, alanine 956 to threonine 1139, asparagine 1155 to threonine 1203, and aspartate 1239 to glutamate 1294. Composition is skewed to low complexity over residues threonine 785 to proline 800, proline 841 to lysine 866, and alanine 956 to lysine 973. A coiled-coil region spans residues glutamate 923 to lysine 957. Positions proline 974–glutamine 989 are enriched in basic and acidic residues. Positions lysine 992–threonine 1006 are enriched in low complexity. The segment covering lysine 1007–threonine 1021 has biased composition (polar residues). Low complexity predominate over residues alanine 1023 to proline 1061. The span at lysine 1092–glutamate 1111 shows a compositional bias: basic and acidic residues. A compositionally biased stretch (low complexity) spans asparagine 1176–asparagine 1198. Residues aspartate 1239–serine 1272 show a composition bias toward polar residues. Basic and acidic residues predominate over residues aspartate 1280–aspartate 1292. One can recognise an MIF4G domain in the interval leucine 1317–lysine 1527. The segment at proline 1530–lysine 1755 is disordered. 3 stretches are compositionally biased toward basic and acidic residues: residues threonine 1538–isoleucine 1550, glutamine 1557–proline 1599, and asparagine 1621–glycine 1634. 2 stretches are compositionally biased toward low complexity: residues glycine 1635–serine 1659 and serine 1688–asparagine 1699. The span at serine 1725–lysine 1740 shows a compositional bias: basic and acidic residues. The MI domain maps to lysine 1760–alanine 1882.

The protein is von Willebrand factor A domain-containing protein DDB_G0286969 of Dictyostelium discoideum (Social amoeba).